The sequence spans 167 residues: UPF0178 protein bll3966 (167 aa).

It belongs to the UPF0178 family.

The sequence is that of UPF0178 protein bll3966 from Bradyrhizobium diazoefficiens (strain JCM 10833 / BCRC 13528 / IAM 13628 / NBRC 14792 / USDA 110).